The primary structure comprises 28 residues: Ranatuerin-2AVa (28 aa).

Cysteine 23 and cysteine 28 are joined by a disulfide.

As to expression, expressed by the skin glands.

The protein resides in the secreted. Its function is as follows. Has antibacterial activity against the Gram positive bacterium L.lactis. The polypeptide is Ranatuerin-2AVa (Rana arvalis (Moor frog)).